Consider the following 446-residue polypeptide: Methylenetetrahydrofolate--tRNA-(uracil-5-)-methyltransferase TrmFO (446 aa).

FAD is bound at residue 11–16 (GGGLAG).

Belongs to the MnmG family. TrmFO subfamily. It depends on FAD as a cofactor.

Its subcellular location is the cytoplasm. It catalyses the reaction uridine(54) in tRNA + (6R)-5,10-methylene-5,6,7,8-tetrahydrofolate + NADH + H(+) = 5-methyluridine(54) in tRNA + (6S)-5,6,7,8-tetrahydrofolate + NAD(+). It carries out the reaction uridine(54) in tRNA + (6R)-5,10-methylene-5,6,7,8-tetrahydrofolate + NADPH + H(+) = 5-methyluridine(54) in tRNA + (6S)-5,6,7,8-tetrahydrofolate + NADP(+). Catalyzes the folate-dependent formation of 5-methyl-uridine at position 54 (M-5-U54) in all tRNAs. This Oleidesulfovibrio alaskensis (strain ATCC BAA-1058 / DSM 17464 / G20) (Desulfovibrio alaskensis) protein is Methylenetetrahydrofolate--tRNA-(uracil-5-)-methyltransferase TrmFO.